The sequence spans 570 residues: Periplasmic trehalase (570 aa).

The first 34 residues, 1–34, serve as a signal peptide directing secretion; the sequence is MIPPEIRRSVLLQKAIKLALAGTLLTFASFSATA. Substrate is bound by residues Arg-159, 166–167, Asn-203, 212–214, 284–286, and Gly-317; these read WD, RSQ, and RPE. Active-site proton donor/acceptor residues include Asp-319 and Glu-503. Glu-518 is a binding site for substrate. The disordered stretch occupies residues 544–570; the sequence is KPCDSVPSTRPASLSATPTKTPSAATQ. Residues 554 to 570 show a composition bias toward low complexity; it reads PASLSATPTKTPSAATQ.

Belongs to the glycosyl hydrolase 37 family. In terms of assembly, monomer.

The protein localises to the periplasm. The catalysed reaction is alpha,alpha-trehalose + H2O = alpha-D-glucose + beta-D-glucose. Functionally, provides the cells with the ability to utilize trehalose at high osmolarity by splitting it into glucose molecules that can subsequently be taken up by the phosphotransferase-mediated uptake system. The sequence is that of Periplasmic trehalase from Salmonella dublin (strain CT_02021853).